A 763-amino-acid polypeptide reads, in one-letter code: ATP-dependent RNA helicase SUPV3L1, mitochondrial (763 aa).

Residues 1 to 65 (MSVNRCIYLL…RPLDTSLFIP (65 aa)) constitute a mitochondrion transit peptide. Residues 39–58 (RRTFDKLSTRHSSSGSSRPL) form a disordered region. Residues 192–332 (EARAIQRKIV…AVDFITELMF (141 aa)) enclose the Helicase ATP-binding domain. An ATP-binding site is contributed by 205-212 (GPTNSGKT). The Helicase C-terminal domain occupies 354 to 519 (HAVESLDNLK…PTAEQIEMFA (166 aa)). 2 disordered regions span residues 679–721 (DSQP…KSSL) and 742–763 (EWAR…RKKK). A compositionally biased stretch (polar residues) spans 680–697 (SQPTDTESNSSSTVPESE).

This sequence belongs to the helicase family. It depends on Mg(2+) as a cofactor. Requires Mn(2+) as cofactor.

The protein resides in the nucleus. The protein localises to the mitochondrion matrix. It localises to the mitochondrion nucleoid. It carries out the reaction ATP + H2O = ADP + phosphate + H(+). Functionally, major helicase player in mitochondrial RNA metabolism. Component of the mitochondrial degradosome (mtEXO) complex, that degrades 3' overhang double-stranded RNA with a 3'-to-5' directionality in an ATP-dependent manner. ATPase and ATP-dependent multisubstrate helicase, able to unwind double-stranded (ds) DNA and RNA, and RNA/DNA heteroduplexes in the 5'-to-3' direction. Plays a role in the RNA surveillance system in mitochondria; regulates the stability of mature mRNAs, the removal of aberrantly formed mRNAs and the rapid degradation of non coding processing intermediates. Also implicated in recombination and chromatin maintenance pathways. May protect cells from apoptosis. Associates with mitochondrial DNA. This Danio rerio (Zebrafish) protein is ATP-dependent RNA helicase SUPV3L1, mitochondrial (supv3l1).